The primary structure comprises 356 residues: UDP-N-acetylglucosamine--N-acetylmuramyl-(pentapeptide) pyrophosphoryl-undecaprenol N-acetylglucosamine transferase (356 aa).

Positions 166, 196, and 290 each coordinate UDP-N-acetyl-alpha-D-glucosamine.

This sequence belongs to the glycosyltransferase 28 family. MurG subfamily.

The protein resides in the cell membrane. The enzyme catalyses Mur2Ac(oyl-L-Ala-gamma-D-Glu-L-Lys-D-Ala-D-Ala)-di-trans,octa-cis-undecaprenyl diphosphate + UDP-N-acetyl-alpha-D-glucosamine = beta-D-GlcNAc-(1-&gt;4)-Mur2Ac(oyl-L-Ala-gamma-D-Glu-L-Lys-D-Ala-D-Ala)-di-trans,octa-cis-undecaprenyl diphosphate + UDP + H(+). The protein operates within cell wall biogenesis; peptidoglycan biosynthesis. Cell wall formation. Catalyzes the transfer of a GlcNAc subunit on undecaprenyl-pyrophosphoryl-MurNAc-pentapeptide (lipid intermediate I) to form undecaprenyl-pyrophosphoryl-MurNAc-(pentapeptide)GlcNAc (lipid intermediate II). This is UDP-N-acetylglucosamine--N-acetylmuramyl-(pentapeptide) pyrophosphoryl-undecaprenol N-acetylglucosamine transferase from Staphylococcus aureus (strain MRSA252).